Consider the following 422-residue polypeptide: Histidine--tRNA ligase (422 aa).

This sequence belongs to the class-II aminoacyl-tRNA synthetase family. As to quaternary structure, homodimer.

It localises to the cytoplasm. It carries out the reaction tRNA(His) + L-histidine + ATP = L-histidyl-tRNA(His) + AMP + diphosphate + H(+). The polypeptide is Histidine--tRNA ligase (Vibrio vulnificus (strain CMCP6)).